A 270-amino-acid chain; its full sequence is Phospholysine phosphohistidine inorganic pyrophosphate phosphatase (270 aa).

Asp17 and Ser19 together coordinate Mg(2+). Residues Asp17–Ser19, Thr54–Asn55, and Lys189 each bind substrate. Asp214 is a Mg(2+) binding site.

Belongs to the HAD-like hydrolase superfamily. Homodimer. Mg(2+) serves as cofactor. Expressed in brain, and at lower levels in liver and kidney. Detected in thyroid (at protein level). Expressed in liver, kidney and moderately in brain.

It localises to the cytoplasm. The protein resides in the nucleus. The enzyme catalyses diphosphate + H2O = 2 phosphate + H(+). Its function is as follows. Phosphatase that hydrolyzes imidodiphosphate, 3-phosphohistidine and 6-phospholysine. Has broad substrate specificity and can also hydrolyze inorganic diphosphate, but with lower efficiency. In Homo sapiens (Human), this protein is Phospholysine phosphohistidine inorganic pyrophosphate phosphatase (LHPP).